We begin with the raw amino-acid sequence, 130 residues long: MARVTVEDCIDKVDNRFDLVLLAAHRARMISSGSPLTIDRDNDKNPVVSLREIADQTISPEDLKEELVHSLQKFVEVDEPEPDTVPLIGSAGASVDADDTEVAMERMTEEELLKGLEGLAPPEEQPEEDE.

The disordered stretch occupies residues 108–130 (TEEELLKGLEGLAPPEEQPEEDE).

Belongs to the RNA polymerase subunit omega family. As to quaternary structure, the RNAP catalytic core consists of 2 alpha, 1 beta, 1 beta' and 1 omega subunit. When a sigma factor is associated with the core the holoenzyme is formed, which can initiate transcription.

It carries out the reaction RNA(n) + a ribonucleoside 5'-triphosphate = RNA(n+1) + diphosphate. Its function is as follows. Promotes RNA polymerase assembly. Latches the N- and C-terminal regions of the beta' subunit thereby facilitating its interaction with the beta and alpha subunits. This chain is DNA-directed RNA polymerase subunit omega, found in Rhodopseudomonas palustris (strain ATCC BAA-98 / CGA009).